Reading from the N-terminus, the 224-residue chain is COMM domain-containing protein 5 (224 aa).

At Ser-2 the chain carries N-acetylserine. The region spanning 151 to 215 (HIADFRWRVD…LVLKEMADLE (65 aa)) is the COMM domain.

Belongs to the COMM domain-containing protein 5 family. In terms of assembly, component of the commander complex consisting of the CCC subcomplex and the retriever subcomplex. Component of the CCC (COMMD/CCDC22/CCDC93) subcomplex consisting of COMMD1, COMMD2, COMMD3, COMMD4, COMMD5, COMMD6, COMMD7, COMMD8, COMMD9, COMMD10, CCDC22 and CCDC93; within the complex forms a heterodimer with COMMD10. Interacts (via COMM domain) with COMMD1 (via COMM domain). Interacts with RELA, RELB, NFKB1/p105. Interacts with CCDC22, CCDC93, SCNN1B, CUL2, CUL3, CUL4A, CUL4B, CUL7.

Its subcellular location is the nucleus. The protein resides in the cytoplasm. Its function is as follows. Scaffold protein in the commander complex that is essential for endosomal recycling of transmembrane cargos; the commander complex is composed of the CCC subcomplex and the retriever subcomplex. May modulate activity of cullin-RING E3 ubiquitin ligase (CRL) complexes. Negatively regulates cell proliferation. Negatively regulates cell cycle G2/M phase transition probably by transactivating p21/CDKN1A through the p53/TP53-independent signaling pathway. Involved in kidney proximal tubule morphogenesis. Down-regulates activation of NF-kappa-B. The polypeptide is COMM domain-containing protein 5 (COMMD5) (Bos taurus (Bovine)).